Consider the following 287-residue polypeptide: 4-diphosphocytidyl-2-C-methyl-D-erythritol kinase (287 aa).

Lys12 is an active-site residue. 95-105 contributes to the ATP binding site; it reads PAQAGMGGGSS. Residue Asp137 is part of the active site.

This sequence belongs to the GHMP kinase family. IspE subfamily.

It carries out the reaction 4-CDP-2-C-methyl-D-erythritol + ATP = 4-CDP-2-C-methyl-D-erythritol 2-phosphate + ADP + H(+). The protein operates within isoprenoid biosynthesis; isopentenyl diphosphate biosynthesis via DXP pathway; isopentenyl diphosphate from 1-deoxy-D-xylulose 5-phosphate: step 3/6. In terms of biological role, catalyzes the phosphorylation of the position 2 hydroxy group of 4-diphosphocytidyl-2C-methyl-D-erythritol. This is 4-diphosphocytidyl-2-C-methyl-D-erythritol kinase from Delftia acidovorans (strain DSM 14801 / SPH-1).